Here is a 138-residue protein sequence, read N- to C-terminus: ATP synthase epsilon chain (138 aa).

It belongs to the ATPase epsilon chain family. As to quaternary structure, F-type ATPases have 2 components, CF(1) - the catalytic core - and CF(0) - the membrane proton channel. CF(1) has five subunits: alpha(3), beta(3), gamma(1), delta(1), epsilon(1). CF(0) has three main subunits: a, b and c.

It is found in the cell inner membrane. Its function is as follows. Produces ATP from ADP in the presence of a proton gradient across the membrane. This chain is ATP synthase epsilon chain, found in Geotalea uraniireducens (strain Rf4) (Geobacter uraniireducens).